We begin with the raw amino-acid sequence, 1154 residues long: DNA-directed RNA polymerase subunit beta' (1154 aa).

Residues cysteine 60, cysteine 62, cysteine 75, and cysteine 78 each contribute to the Zn(2+) site. Residues aspartate 449, aspartate 451, and aspartate 453 each coordinate Mg(2+). The Zn(2+) site is built by cysteine 774, cysteine 848, cysteine 855, and cysteine 858.

Belongs to the RNA polymerase beta' chain family. As to quaternary structure, the RNAP catalytic core consists of 2 alpha, 1 beta, 1 beta' and 1 omega subunit. When a sigma factor is associated with the core the holoenzyme is formed, which can initiate transcription. It depends on Mg(2+) as a cofactor. Zn(2+) serves as cofactor.

The catalysed reaction is RNA(n) + a ribonucleoside 5'-triphosphate = RNA(n+1) + diphosphate. In terms of biological role, DNA-dependent RNA polymerase catalyzes the transcription of DNA into RNA using the four ribonucleoside triphosphates as substrates. The polypeptide is DNA-directed RNA polymerase subunit beta' (Desulforudis audaxviator (strain MP104C)).